A 572-amino-acid polypeptide reads, in one-letter code: Fatty acid amide hydrolase 1 (572 aa).

The signal sequence occupies residues 1–14; sequence MIFYLVLLVLGAIA. A coiled-coil region spans residues 32 to 63; the sequence is IVAQRRRDDLSKNVEQARKAADKLDTQRRDWI. Active-site charge relay system residues include Lys139 and Ser214. Residues Ser214 and 235 to 238 each bind substrate; that span reads VGGS. Ser238 functions as the Acyl-ester intermediate in the catalytic mechanism.

The protein belongs to the amidase family. Expressed in the pharynx, some pharyngeal neurons, the posterior intestine and anal depressor muscles.

It carries out the reaction N-(5Z,8Z,11Z,14Z-eicosatetraenoyl)-ethanolamine + H2O = ethanolamine + (5Z,8Z,11Z,14Z)-eicosatetraenoate. The catalysed reaction is (9Z)-octadecenamide + H2O = (9Z)-octadecenoate + NH4(+). The enzyme catalyses (5Z,8Z,11Z,14Z,17Z-eicosapentaenoyl) ethanolamine + H2O = (5Z,8Z,11Z,14Z,17Z)-eicosapentaenoate + ethanolamine. It catalyses the reaction N-(9Z-hexadecenoyl) ethanolamine + H2O = (9Z)-hexadecenoate + ethanolamine. It carries out the reaction N-(9Z-octadecenoyl) ethanolamine + H2O = ethanolamine + (9Z)-octadecenoate. The catalysed reaction is N-octadecanoyl ethanolamine + H2O = octadecanoate + ethanolamine. The enzyme catalyses N-docosanoyl-ethanolamine + H2O = docosanoate + ethanolamine. It catalyses the reaction N-(15Z-tetracosenoyl)-ethanolamine + H2O = (15Z)-tetracosenoate + ethanolamine. It carries out the reaction N-hexadecanoylethanolamine + H2O = ethanolamine + hexadecanoate. The catalysed reaction is N-(9Z,12Z-octadecadienoyl)-ethanolamine + H2O = ethanolamine + (9Z,12Z)-octadecadienoate. The enzyme catalyses (9Z)-octadecenoate + glycine = N-(9Z-octadecenoyl)glycine + H2O. It catalyses the reaction N-(5Z,8Z,11Z,14Z)-eicosatetraenoyl-glycine + H2O = (5Z,8Z,11Z,14Z)-eicosatetraenoate + glycine. It carries out the reaction N-(5Z,8Z,11Z,14Z-eicosatetraenoyl)-L-serine + H2O = (5Z,8Z,11Z,14Z)-eicosatetraenoate + L-serine. Its function is as follows. Catalyzes the hydrolysis of endogenous amidated lipids like anandamide (AEA or N-(5Z,8Z,11Z,14Z-eicosatetraenoyl)-ethanolamine) and eicosapentaneoyl ethanolamide (EPEA or (5Z,8Z,11Z,14Z,17Z-eicosapentaenoyl) ethanolamine), as well as other fatty amides, to their corresponding fatty acids, thereby regulating the signaling functions of these molecules. EPEA promotes dauer formation and may constitute a signal of high nutrient availability. Breakdown of EPEA may promote lifespan extension when nutrient availability is high. Facilitates axon regeneration after injury by degradating inhibitory compounds such as AEA. FAAH cooperates with PM20D1 in the hydrolysis of amino acid-conjugated fatty acids such as N-fatty acyl glycine and N-fatty acyl-L-serine, thereby acting as a physiological regulator of specific subsets of intracellular, but not of extracellular, N-fatty acyl amino acids. The protein is Fatty acid amide hydrolase 1 of Caenorhabditis elegans.